Here is a 415-residue protein sequence, read N- to C-terminus: MGGEAGADGPRGRVKSLGLVFEDESKGCYSSGETVAGHVLLEAAEPVALRGLRLEAQGRATSAWGPSAGARVCIGGGSPAASSEVEYLNLRLSLLEAPAGEGVTLLQPGKHEFPFRFQLPSEPLATSFTGKYGSIQYCVRAVLERPQVPDQSVRRELQVVSHVDVNTPPLLTPMLKTQEKMVGCWLFTSGPVSLSVKIERKGYCNGEAIPIYAEIENCSSRLVVPKAAIFQTQTYLASGKTKTVRHMVANVRGNHIGSGSTDTWNGKMLKIPPVTPSILDCCIIRVDYSLAVYIHIPGAKRLMLELPLVIGTIPYSGFGRRNSSVASQFSMDMCWLALALPEQPEAPPNYADVVSEEEFSRHVPPYPQPSDCDGEACYSMFACIQEFRFQPPPLYSEVDPHPGDAQETQPVSFIL.

2 short sequence motifs (PPxY motif) span residues 347-350 (PPNY) and 392-395 (PPLY).

It belongs to the arrestin family. Interacts with ADRB2. Interacts (via PPxY motifs) with ITCH, NEDD4L and WWP2. Interacts with AVPR2. Identified in a complex containing at least ARRDC4, AVPR2 and HGS. Interacts with SLC11A2; controls the incorporation of SLC11A2 into extracellular vesicles through an ubiquitination-dependent mechanism. Interacts with TRIM65.

The protein resides in the early endosome. It localises to the cell membrane. Its subcellular location is the cytoplasmic vesicle. In terms of biological role, functions as an adapter recruiting ubiquitin-protein ligases to their specific substrates. Plays a role in endocytosis of activated G protein-coupled receptors (GPCRs). Through an ubiquitination-dependent mechanism also plays a role in the incorporation of SLC11A2 into extracellular vesicles. May play a role in glucose uptake. Participates in innate immune response by promoting IFIH1/MDA5 activation through interaction with TRIM65. The chain is Arrestin domain-containing protein 4 from Mus musculus (Mouse).